The following is a 281-amino-acid chain: NADPH-dependent 7-cyano-7-deazaguanine reductase (281 aa).

88–90 (IES) is a substrate binding site. 90-91 (SK) is an NADPH binding site. Cysteine 189 functions as the Thioimide intermediate in the catalytic mechanism. Aspartate 196 functions as the Proton donor in the catalytic mechanism. Substrate is bound at residue 228–229 (HE). 257–258 (RG) serves as a coordination point for NADPH.

It belongs to the GTP cyclohydrolase I family. QueF type 2 subfamily. In terms of assembly, homodimer.

It is found in the cytoplasm. It carries out the reaction 7-aminomethyl-7-carbaguanine + 2 NADP(+) = 7-cyano-7-deazaguanine + 2 NADPH + 3 H(+). It functions in the pathway tRNA modification; tRNA-queuosine biosynthesis. Functionally, catalyzes the NADPH-dependent reduction of 7-cyano-7-deazaguanine (preQ0) to 7-aminomethyl-7-deazaguanine (preQ1). The protein is NADPH-dependent 7-cyano-7-deazaguanine reductase of Yersinia pestis bv. Antiqua (strain Antiqua).